Here is an 886-residue protein sequence, read N- to C-terminus: DNA mismatch repair protein MutS (886 aa).

641-648 (GPNMAGKS) serves as a coordination point for ATP.

It belongs to the DNA mismatch repair MutS family.

In terms of biological role, this protein is involved in the repair of mismatches in DNA. It is possible that it carries out the mismatch recognition step. This protein has a weak ATPase activity. This chain is DNA mismatch repair protein MutS, found in Rickettsia rickettsii (strain Sheila Smith).